Here is a 287-residue protein sequence, read N- to C-terminus: ATP synthase subunit a (287 aa).

The next 6 membrane-spanning stretches (helical) occupy residues 38 to 58 (DSMV…WTAA), 96 to 116 (FIAP…AMDM), 139 to 161 (VVPT…LRFW), 187 to 207 (PLFA…EYVA), 225 to 245 (LVFM…SGVL), and 259 to 279 (LFHI…ALIY).

The protein belongs to the ATPase A chain family. As to quaternary structure, F-type ATPases have 2 components, CF(1) - the catalytic core - and CF(0) - the membrane proton channel. CF(1) has five subunits: alpha(3), beta(3), gamma(1), delta(1), epsilon(1). CF(0) has three main subunits: a(1), b(2) and c(9-12). The alpha and beta chains form an alternating ring which encloses part of the gamma chain. CF(1) is attached to CF(0) by a central stalk formed by the gamma and epsilon chains, while a peripheral stalk is formed by the delta and b chains.

The protein resides in the cell inner membrane. Its function is as follows. Key component of the proton channel; it plays a direct role in the translocation of protons across the membrane. This Verminephrobacter eiseniae (strain EF01-2) protein is ATP synthase subunit a.